A 172-amino-acid polypeptide reads, in one-letter code: 3-hydroxydecanoyl-[acyl-carrier-protein] dehydratase (172 aa).

The active site involves histidine 71.

The protein belongs to the thioester dehydratase family. FabA subfamily. As to quaternary structure, homodimer.

The protein localises to the cytoplasm. The catalysed reaction is a (3R)-hydroxyacyl-[ACP] = a (2E)-enoyl-[ACP] + H2O. It catalyses the reaction (3R)-hydroxydecanoyl-[ACP] = (2E)-decenoyl-[ACP] + H2O. The enzyme catalyses (2E)-decenoyl-[ACP] = (3Z)-decenoyl-[ACP]. The protein operates within lipid metabolism; fatty acid biosynthesis. Necessary for the introduction of cis unsaturation into fatty acids. Catalyzes the dehydration of (3R)-3-hydroxydecanoyl-ACP to E-(2)-decenoyl-ACP and then its isomerization to Z-(3)-decenoyl-ACP. Can catalyze the dehydratase reaction for beta-hydroxyacyl-ACPs with saturated chain lengths up to 16:0, being most active on intermediate chain length. The sequence is that of 3-hydroxydecanoyl-[acyl-carrier-protein] dehydratase from Aliivibrio fischeri (strain ATCC 700601 / ES114) (Vibrio fischeri).